Consider the following 347-residue polypeptide: NAD-dependent alcohol dehydrogenase (347 aa).

Lys-11 is subject to N6-methyllysine; partial. Zn(2+) is bound by residues Cys-38, His-68, Glu-98, Cys-101, Cys-104, Cys-112, and Cys-154. At Lys-213 the chain carries N6-methyllysine; partial.

This sequence belongs to the zinc-containing alcohol dehydrogenase family. In terms of assembly, homodimer and homotetramer. Zn(2+) serves as cofactor.

The enzyme catalyses a primary alcohol + NAD(+) = an aldehyde + NADH + H(+). It carries out the reaction a secondary alcohol + NAD(+) = a ketone + NADH + H(+). This Saccharolobus solfataricus (strain ATCC 35092 / DSM 1617 / JCM 11322 / P2) (Sulfolobus solfataricus) protein is NAD-dependent alcohol dehydrogenase (adh).